The chain runs to 92 residues: Costars family protein ST45-2 (92 aa).

M1 bears the N-acetylmethionine mark.

The protein belongs to the costars family.

The polypeptide is Costars family protein ST45-2 (Eutrema halophilum (Salt cress)).